Reading from the N-terminus, the 645-residue chain is E3 ubiquitin-protein ligase ORTHRUS 2 (645 aa).

The PHD-type zinc finger occupies 12–63 (DGVCMRCKSNPPPEESLTCGTCVTPWHVSCLSSPPKTLASTLQWHCPDCSGE). The tract at residues 96-133 (LSTEEKAKMRQRLLSGKGVEEDDEEEKRKKKGKGKNPN) is disordered. The RING-type 1 zinc finger occupies 146-185 (CSFCMQLPERPVTKPCGHNACLKCFEKWMGQGKRTCGKCR). Positions 273 to 422 (VRNQGLLVGE…FKVCRYLFVR (150 aa)) constitute a YDG domain. The RING-type 2 zinc finger occupies 518-575 (CQICQQVLTLPVTTPCAHNFCKACLEAKFAGKTLVRERSTGGRTLRSRKNVLNCPCCP). The stretch at 583–613 (QNPQVNREVAEVIEKLKTQEEDTAELEDEDE) forms a coiled coil. The interval 599-645 (KTQEEDTAELEDEDEGECSGTTPEEDSEQPKKRIKLDTDATVSATIR) is disordered. Residues 603-625 (EDTAELEDEDEGECSGTTPEEDS) are compositionally biased toward acidic residues. Positions 626-636 (EQPKKRIKLDT) are enriched in basic and acidic residues.

Interacts with histones CENH3, HTB2, HTR3 and H4. As to expression, mostly expressed in inflorescence and, to a lower extent, in leaves.

The protein resides in the nucleus. It catalyses the reaction S-ubiquitinyl-[E2 ubiquitin-conjugating enzyme]-L-cysteine + [acceptor protein]-L-lysine = [E2 ubiquitin-conjugating enzyme]-L-cysteine + N(6)-ubiquitinyl-[acceptor protein]-L-lysine.. It participates in protein modification; protein ubiquitination. E3 ubiquitin-protein ligase. Participates in CpG methylation-dependent transcriptional regulation and epigenetic transcriptional silencing. Mediates ubiquitination with the E2 ubiquitin-conjugating enzyme UBC11. Promotes methylation-mediated gene silencing leading, for example, to early flowering. Associates with methylated DNA, and can bind to CpG, CpNpG, and CpNpN DNA motifs, with a strong preference for methylated forms, and with highest affinity for CpG substrate. Probably acts at the DNA methylation?histone interface to maintain centromeric heterochromatin. The protein is E3 ubiquitin-protein ligase ORTHRUS 2 (ORTH2) of Arabidopsis thaliana (Mouse-ear cress).